Consider the following 205-residue polypeptide: Adenylyl-sulfate kinase (205 aa).

Residue 31–38 (GLSGAGKS) participates in ATP binding. Ser105 functions as the Phosphoserine intermediate in the catalytic mechanism.

Belongs to the APS kinase family.

The enzyme catalyses adenosine 5'-phosphosulfate + ATP = 3'-phosphoadenylyl sulfate + ADP + H(+). It functions in the pathway sulfur metabolism; hydrogen sulfide biosynthesis; sulfite from sulfate: step 2/3. Catalyzes the synthesis of activated sulfate. The chain is Adenylyl-sulfate kinase from Shewanella oneidensis (strain ATCC 700550 / JCM 31522 / CIP 106686 / LMG 19005 / NCIMB 14063 / MR-1).